The sequence spans 100 residues: Small ribosomal subunit protein uS14c (100 aa).

This sequence belongs to the universal ribosomal protein uS14 family. As to quaternary structure, part of the 30S ribosomal subunit.

It is found in the plastid. Its subcellular location is the chloroplast. Its function is as follows. Binds 16S rRNA, required for the assembly of 30S particles. This is Small ribosomal subunit protein uS14c from Anthoceros angustus (Hornwort).